The following is a 214-amino-acid chain: uncharacterized protein (214 aa).

The next 4 helical transmembrane spans lie at 43–63 (IQKP…AAHI), 84–104 (IEWA…IPVI), 116–136 (ALVI…EYFI), and 150–170 (PVTR…FGIF).

It localises to the host membrane. This is an uncharacterized protein from Citrus leprosis virus C (isolate Citrus sinesis/Brazil/Cordeiropolis/2003) (CiLV-C).